Reading from the N-terminus, the 576-residue chain is uncharacterized protein (576 aa).

Polar residues-rich tracts occupy residues 1–21 (MSTNPNAGIQPLTNSISQSAS) and 28–40 (HTTSHESVSTYQL). The segment at 1–40 (MSTNPNAGIQPLTNSISQSASAHPELYHTTSHESVSTYQL) is disordered. The next 12 helical transmembrane spans lie at 149–169 (FASSVFSVPAEAITTIFHISL), 173–193 (LLTMTVFLCGYIAGPIVWAPL), 200–220 (KLPLLIGMFGFGIFNISVAVA), 231–251 (FFSGFFASAPLTVVAAAFADM), 261–281 (ITIFAALVFDGPLVSPIIGGF), 291–311 (WTEYITSFMGFFALVIVYLFC), 366–386 (PIVFLITLYSSFVYAILYLLL), 401–421 (MGVAELPYIGLLVGVFIGSAI), 446–466 (LPPMMIGCFMFPAGIFWLSWS), 472–492 (VHWIVPTLSGLATGCGILLIF), 503–525 (YLFRAASAVAANTIMRSAMAAGF), and 542–562 (GSLLGFIAVALIPMPFAFFFF).

Belongs to the major facilitator superfamily. CAR1 family.

The protein localises to the endoplasmic reticulum. It is found in the golgi apparatus. It localises to the membrane. This is an uncharacterized protein from Schizosaccharomyces pombe (strain 972 / ATCC 24843) (Fission yeast).